A 654-amino-acid polypeptide reads, in one-letter code: DNA-directed RNA polymerase III subunit RPC3 (654 aa).

T27 carries the phosphothreonine modification. 2 disordered regions span residues 381–401 and 422–448; these read LSRK…ASLP and KSLQ…EDPH. Residues S392 and S394 each carry the phosphoserine modification. A compositionally biased stretch (acidic residues) spans 429–444; it reads DTQEEDEEEEDLDADT. Positions 581-602 are leucine-zipper; it reads LEWNMANLLFKKEKLKQENSTL.

It belongs to the eukaryotic RPC3/POLR3C RNA polymerase subunit family. Component of the RNA polymerase III (Pol III) complex consisting of 17 subunits.

The protein resides in the cytoplasm. The protein localises to the nucleus. DNA-dependent RNA polymerase catalyzes the transcription of DNA into RNA using the four ribonucleoside triphosphates as substrates. Specific core component of RNA polymerase III which synthesizes small RNAs, such as 5S rRNA and tRNAs. The protein is DNA-directed RNA polymerase III subunit RPC3 (RPC82) of Saccharomyces cerevisiae (strain ATCC 204508 / S288c) (Baker's yeast).